The primary structure comprises 198 residues: Cytochrome c oxidase assembly protein CtaG (198 aa).

Over 1-12 (MADNGQADRKER) the chain is Cytoplasmic. The helical; Signal-anchor for type II membrane protein transmembrane segment at 13 to 35 (SNGVIVGTCLAFVAGMIGMAYAA) threads the bilayer. Residues 36–198 (VPLYDMFCRV…QVKAKAENKL (163 aa)) are Periplasmic-facing.

The protein belongs to the COX11/CtaG family.

The protein localises to the cell inner membrane. Functionally, exerts its effect at some terminal stage of cytochrome c oxidase synthesis, probably by being involved in the insertion of the copper B into subunit I. In Rhizobium meliloti (strain 1021) (Ensifer meliloti), this protein is Cytochrome c oxidase assembly protein CtaG.